We begin with the raw amino-acid sequence, 322 residues long: Extracellular metalloprotease AFUB_008060 (322 aa).

The first 22 residues, 1-22 (MLPFNSCVYVLLIISLMSNCRA), serve as a signal peptide directing secretion. Asn-123 and Asn-197 each carry an N-linked (GlcNAc...) asparagine glycan. His-233 lines the Zn(2+) pocket. Residue Glu-234 is part of the active site. A Zn(2+)-binding site is contributed by His-237. Cysteines 272 and 299 form a disulfide.

It belongs to the peptidase M43B family.

The protein resides in the secreted. Secreted metalloproteinase that allows assimilation of proteinaceous substrates. Plays a pivotal role as a pathogenicity determinant during infections and contributes to the ability of the pathogen to persist within the mammalian host. The sequence is that of Extracellular metalloprotease AFUB_008060 from Aspergillus fumigatus (strain CBS 144.89 / FGSC A1163 / CEA10) (Neosartorya fumigata).